The sequence spans 262 residues: Orotidine 5'-phosphate decarboxylase (262 aa).

Substrate-binding positions include aspartate 35, 57 to 59 (KTH), 89 to 98 (DRKFADIGNT), tyrosine 215, and arginine 233. Lysine 91 functions as the Proton donor in the catalytic mechanism.

The protein belongs to the OMP decarboxylase family.

The enzyme catalyses orotidine 5'-phosphate + H(+) = UMP + CO2. Its pathway is pyrimidine metabolism; UMP biosynthesis via de novo pathway; UMP from orotate: step 2/2. The chain is Orotidine 5'-phosphate decarboxylase (URA3) from Pichia kudriavzevii (Yeast).